The sequence spans 364 residues: Dual-specificity RNA methyltransferase RlmN (364 aa).

E93 serves as the catalytic Proton acceptor. The Radical SAM core domain occupies 99–337; sequence EDDRGTLCIS…ATIRKTRGDD (239 aa). A disulfide bridge links C106 with C342. C113, C117, and C120 together coordinate [4Fe-4S] cluster. S-adenosyl-L-methionine is bound by residues 167–168, S199, 221–223, and N299; these read GE and SLH. C342 functions as the S-methylcysteine intermediate in the catalytic mechanism.

It belongs to the radical SAM superfamily. RlmN family. [4Fe-4S] cluster serves as cofactor.

It localises to the cytoplasm. It catalyses the reaction adenosine(2503) in 23S rRNA + 2 reduced [2Fe-2S]-[ferredoxin] + 2 S-adenosyl-L-methionine = 2-methyladenosine(2503) in 23S rRNA + 5'-deoxyadenosine + L-methionine + 2 oxidized [2Fe-2S]-[ferredoxin] + S-adenosyl-L-homocysteine. The enzyme catalyses adenosine(37) in tRNA + 2 reduced [2Fe-2S]-[ferredoxin] + 2 S-adenosyl-L-methionine = 2-methyladenosine(37) in tRNA + 5'-deoxyadenosine + L-methionine + 2 oxidized [2Fe-2S]-[ferredoxin] + S-adenosyl-L-homocysteine. Functionally, specifically methylates position 2 of adenine 2503 in 23S rRNA and position 2 of adenine 37 in tRNAs. m2A2503 modification seems to play a crucial role in the proofreading step occurring at the peptidyl transferase center and thus would serve to optimize ribosomal fidelity. This chain is Dual-specificity RNA methyltransferase RlmN, found in Dichelobacter nodosus (strain VCS1703A).